Reading from the N-terminus, the 99-residue chain is Protein RnfH (99 aa).

Belongs to the UPF0125 (RnfH) family.

The sequence is that of Protein RnfH from Buchnera aphidicola subsp. Acyrthosiphon pisum (strain 5A).